Consider the following 162-residue polypeptide: Shikimate kinase (162 aa).

Position 10 to 15 (Gly-10 to Thr-15) interacts with ATP. Position 14 (Ser-14) interacts with Mg(2+). Residues Asp-28, Arg-52, and Gly-73 each coordinate substrate. Arg-113 is an ATP binding site. Arg-129 serves as a coordination point for substrate.

The protein belongs to the shikimate kinase family. In terms of assembly, monomer. The cofactor is Mg(2+).

It is found in the cytoplasm. It catalyses the reaction shikimate + ATP = 3-phosphoshikimate + ADP + H(+). It participates in metabolic intermediate biosynthesis; chorismate biosynthesis; chorismate from D-erythrose 4-phosphate and phosphoenolpyruvate: step 5/7. In terms of biological role, catalyzes the specific phosphorylation of the 3-hydroxyl group of shikimic acid using ATP as a cosubstrate. The polypeptide is Shikimate kinase (Lactococcus lactis subsp. lactis (strain IL1403) (Streptococcus lactis)).